Here is a 356-residue protein sequence, read N- to C-terminus: Phosphoribosyl pyrophosphate synthase-associated protein 1 (356 aa).

N-acetylmethionine is present on methionine 1. Asparagine 2 carries the N-acetylproline modification. Phosphoserine occurs at positions 177 and 215.

This sequence belongs to the ribose-phosphate pyrophosphokinase family. As to quaternary structure, binds to PRPS1 and PRPS2. Ubiquitous.

Its function is as follows. Seems to play a negative regulatory role in 5-phosphoribose 1-diphosphate synthesis. This Homo sapiens (Human) protein is Phosphoribosyl pyrophosphate synthase-associated protein 1 (PRPSAP1).